The primary structure comprises 494 residues: Probable malate:quinone oxidoreductase 3 (494 aa).

The protein belongs to the MQO family. It depends on FAD as a cofactor.

It catalyses the reaction (S)-malate + a quinone = a quinol + oxaloacetate. Its pathway is carbohydrate metabolism; tricarboxylic acid cycle; oxaloacetate from (S)-malate (quinone route): step 1/1. The sequence is that of Probable malate:quinone oxidoreductase 3 from Staphylococcus epidermidis (strain ATCC 12228 / FDA PCI 1200).